The sequence spans 131 residues: Small ribosomal subunit protein uS9 (131 aa).

This sequence belongs to the universal ribosomal protein uS9 family.

The protein is Small ribosomal subunit protein uS9 of Actinobacillus pleuropneumoniae serotype 7 (strain AP76).